The primary structure comprises 532 residues: MNQASTRFIFVTGGVVSSLGKGLAAASIGALLQARGFKICLRKLDPYLNIDPGTMSPIQHGEVFVTDDGAETDLDLGHYERFTGVKTTKNDNITTGKVYHNLLKKERRGDYLGQTVQIIPHVTDLINSFILHDTDKLDFVICEIGGTVGDIESQPFLESIRQIGYKLSKNNTIFVHLTLVPYIDAAMELKTKPTQHSVKELSSVGIQPDIILYRSKIPLSKEQRDKIANLCNVSSTNIIPALDVKNIYELPISYHNYNLDTQILNHFNIDSPEPDLRKWENILNISHAVTKTVNVAIIGKYIKLLDAYKSLIEALEHASIHNKVKLSIKWIDSRSLDSNEINIFDKVDSILIPGGFGDDGIQGKMTAITYARLNKIPFLGICMGMQLAIIEFANNVAHLEDANSTEFNLYCKNPVIHQLPELQQNFLGGSMKLGSCPCYLESGSKIFSIYQQSIIHERRRHRYAFNLQYKDLLEQHGLIFTGKSNNNNDSLIEVIELKDHPWFIGVQFHPEFKSSPFHSHPLFISFIKASLD.

Residues 1–269 form an amidoligase domain region; that stretch reads MNQASTRFIF…DTQILNHFNI (269 aa). S17 is a binding site for CTP. S17 is a UTP binding site. ATP is bound by residues 18–23 and D75; that span reads SLGKGL. Residues D75 and E143 each coordinate Mg(2+). Residues 150–152, 190–195, and K226 each bind CTP; these read DIE and KTKPTQ. UTP-binding positions include 190-195 and K226; that span reads KTKPTQ. Residues 294 to 532 form the Glutamine amidotransferase type-1 domain; it reads NVAIIGKYIK…FISFIKASLD (239 aa). G355 serves as a coordination point for L-glutamine. C382 serves as the catalytic Nucleophile; for glutamine hydrolysis. Residues 383–386, E406, and R462 contribute to the L-glutamine site; that span reads MGMQ. Catalysis depends on residues H509 and E511.

Belongs to the CTP synthase family. As to quaternary structure, homotetramer.

It carries out the reaction UTP + L-glutamine + ATP + H2O = CTP + L-glutamate + ADP + phosphate + 2 H(+). The catalysed reaction is L-glutamine + H2O = L-glutamate + NH4(+). It catalyses the reaction UTP + NH4(+) + ATP = CTP + ADP + phosphate + 2 H(+). It participates in pyrimidine metabolism; CTP biosynthesis via de novo pathway; CTP from UDP: step 2/2. Allosterically activated by GTP, when glutamine is the substrate; GTP has no effect on the reaction when ammonia is the substrate. The allosteric effector GTP functions by stabilizing the protein conformation that binds the tetrahedral intermediate(s) formed during glutamine hydrolysis. Inhibited by the product CTP, via allosteric rather than competitive inhibition. Catalyzes the ATP-dependent amination of UTP to CTP with either L-glutamine or ammonia as the source of nitrogen. Regulates intracellular CTP levels through interactions with the four ribonucleotide triphosphates. The polypeptide is CTP synthase (Ehrlichia chaffeensis (strain ATCC CRL-10679 / Arkansas)).